We begin with the raw amino-acid sequence, 496 residues long: Glycerol kinase (496 aa).

Thr11 provides a ligand contact to ADP. 3 residues coordinate ATP: Thr11, Ser12, and Ser13. Residue Thr11 coordinates sn-glycerol 3-phosphate. Arg15 provides a ligand contact to ADP. 4 residues coordinate sn-glycerol 3-phosphate: Arg81, Glu82, Tyr133, and Asp242. Arg81, Glu82, Tyr133, Asp242, and Gln243 together coordinate glycerol. The ADP site is built by Thr264 and Gly307. 4 residues coordinate ATP: Thr264, Gly307, Gln311, and Gly412. Residues Gly412 and Asn416 each contribute to the ADP site.

The protein belongs to the FGGY kinase family.

The catalysed reaction is glycerol + ATP = sn-glycerol 3-phosphate + ADP + H(+). It participates in polyol metabolism; glycerol degradation via glycerol kinase pathway; sn-glycerol 3-phosphate from glycerol: step 1/1. Its activity is regulated as follows. Inhibited by fructose 1,6-bisphosphate (FBP). Functionally, key enzyme in the regulation of glycerol uptake and metabolism. Catalyzes the phosphorylation of glycerol to yield sn-glycerol 3-phosphate. This chain is Glycerol kinase, found in Albidiferax ferrireducens (strain ATCC BAA-621 / DSM 15236 / T118) (Rhodoferax ferrireducens).